The chain runs to 497 residues: Kynureninase (497 aa).

The tract at residues 59 to 86 (GRLPAYPPNHAKPGETATAQNGTSNTND) is disordered. Over residues 75-86 (ATAQNGTSNTND) the composition is skewed to polar residues. Residues L166, T167, 194–197 (FPSD), D278, H281, and Y303 each bind pyridoxal 5'-phosphate. K304 is modified (N6-(pyridoxal phosphate)lysine). 2 residues coordinate pyridoxal 5'-phosphate: W337 and N365.

This sequence belongs to the kynureninase family. In terms of assembly, homodimer. Pyridoxal 5'-phosphate is required as a cofactor.

Its subcellular location is the cytoplasm. It carries out the reaction L-kynurenine + H2O = anthranilate + L-alanine + H(+). The catalysed reaction is 3-hydroxy-L-kynurenine + H2O = 3-hydroxyanthranilate + L-alanine + H(+). It participates in amino-acid degradation; L-kynurenine degradation; L-alanine and anthranilate from L-kynurenine: step 1/1. It functions in the pathway cofactor biosynthesis; NAD(+) biosynthesis; quinolinate from L-kynurenine: step 2/3. Functionally, catalyzes the cleavage of L-kynurenine (L-Kyn) and L-3-hydroxykynurenine (L-3OHKyn) into anthranilic acid (AA) and 3-hydroxyanthranilic acid (3-OHAA), respectively. This Pyricularia oryzae (strain 70-15 / ATCC MYA-4617 / FGSC 8958) (Rice blast fungus) protein is Kynureninase.